Consider the following 245-residue polypeptide: Sec-independent protein translocase protein TatC (245 aa).

The next 6 membrane-spanning stretches (helical) occupy residues 17–37 (FISVACIVVMFIVCFALRSYI), 73–93 (FFAAFIFSLPVIFWQFWKFVA), 107–127 (FVSFASIMFAFGACFCYFVVV), 159–179 (VVVAFGLAFEMPVIAFFFAKI), 191–207 (FRIAVLVIFVFSAFMTP), and 210–230 (VLSQFLMAGPLCGLYGLSILI).

Belongs to the TatC family. The Tat system comprises two distinct complexes: a TatABC complex, containing multiple copies of TatA, TatB and TatC subunits, and a separate TatA complex, containing only TatA subunits. Substrates initially bind to the TatABC complex, which probably triggers association of the separate TatA complex to form the active translocon.

The protein resides in the cell inner membrane. Its function is as follows. Part of the twin-arginine translocation (Tat) system that transports large folded proteins containing a characteristic twin-arginine motif in their signal peptide across membranes. Together with TatB, TatC is part of a receptor directly interacting with Tat signal peptides. This chain is Sec-independent protein translocase protein TatC, found in Campylobacter jejuni subsp. jejuni serotype O:2 (strain ATCC 700819 / NCTC 11168).